Reading from the N-terminus, the 246-residue chain is 1-(5-phosphoribosyl)-5-[(5-phosphoribosylamino)methylideneamino] imidazole-4-carboxamide isomerase (246 aa).

The active-site Proton acceptor is the D8. Residue D131 is the Proton donor of the active site.

This sequence belongs to the HisA/HisF family.

Its subcellular location is the cytoplasm. The enzyme catalyses 1-(5-phospho-beta-D-ribosyl)-5-[(5-phospho-beta-D-ribosylamino)methylideneamino]imidazole-4-carboxamide = 5-[(5-phospho-1-deoxy-D-ribulos-1-ylimino)methylamino]-1-(5-phospho-beta-D-ribosyl)imidazole-4-carboxamide. It functions in the pathway amino-acid biosynthesis; L-histidine biosynthesis; L-histidine from 5-phospho-alpha-D-ribose 1-diphosphate: step 4/9. The sequence is that of 1-(5-phosphoribosyl)-5-[(5-phosphoribosylamino)methylideneamino] imidazole-4-carboxamide isomerase from Albidiferax ferrireducens (strain ATCC BAA-621 / DSM 15236 / T118) (Rhodoferax ferrireducens).